The following is a 208-amino-acid chain: Large ribosomal subunit protein uL4 (208 aa).

The segment at 45-78 is disordered; it reads RQGTAKSKERSEMSGSTRKLGRQKGSGGARRGDI.

Belongs to the universal ribosomal protein uL4 family. Part of the 50S ribosomal subunit.

One of the primary rRNA binding proteins, this protein initially binds near the 5'-end of the 23S rRNA. It is important during the early stages of 50S assembly. It makes multiple contacts with different domains of the 23S rRNA in the assembled 50S subunit and ribosome. Functionally, forms part of the polypeptide exit tunnel. The chain is Large ribosomal subunit protein uL4 from Azobacteroides pseudotrichonymphae genomovar. CFP2.